Here is a 37-residue protein sequence, read N- to C-terminus: U1-theraphotoxin-Hs1b (37 aa).

Disulfide bonds link Cys-4–Cys-18, Cys-8–Cys-29, and Cys-23–Cys-34.

In terms of assembly, form 1 and form 2 may dimerize. As to expression, expressed by the venom gland.

It localises to the secreted. Lethal neurotoxin that blocks neuromuscular transmission. Acts cooperatively to potentiate the activity of huwentoxin-I. This Cyriopagopus schmidti (Chinese bird spider) protein is U1-theraphotoxin-Hs1b.